Here is a 303-residue protein sequence, read N- to C-terminus: GTPase Era (303 aa).

Residues 8–176 enclose the Era-type G domain; the sequence is YCGFIAIVGR…ASIVRKHMPE (169 aa). Residues 16-23 form a G1 region; sequence GRPNVGKS. 16–23 is a binding site for GTP; that stretch reads GRPNVGKS. Residues 42 to 46 are G2; the sequence is QTTRH. A G3 region spans residues 63–66; sequence DTPG. Residues 63-67 and 125-128 each bind GTP; these read DTPGL and NKVD. The G4 stretch occupies residues 125–128; it reads NKVD. A G5 region spans residues 155 to 157; sequence ISA. The KH type-2 domain maps to 207–284; that stretch reads LGEELPYSVT…HLELWVKVKS (78 aa).

The protein belongs to the TRAFAC class TrmE-Era-EngA-EngB-Septin-like GTPase superfamily. Era GTPase family. In terms of assembly, monomer.

It localises to the cytoplasm. It is found in the cell inner membrane. An essential GTPase that binds both GDP and GTP, with rapid nucleotide exchange. Plays a role in 16S rRNA processing and 30S ribosomal subunit biogenesis and possibly also in cell cycle regulation and energy metabolism. This Yersinia pseudotuberculosis serotype O:1b (strain IP 31758) protein is GTPase Era.